An 86-amino-acid polypeptide reads, in one-letter code: RNA-binding protein Hfq (86 aa).

The Sm domain occupies 9–68 (DPYLNTLRKEKVPVSIYLVNGIKLQGSIESFDQFVVLLKNTVSQMVYKHAISTVVPARPV). Residues 67-86 (PVRLPSPTDGEHGDSEPGNA) form a disordered region. A compositionally biased stretch (basic and acidic residues) spans 75 to 86 (DGEHGDSEPGNA).

The protein belongs to the Hfq family. In terms of assembly, homohexamer.

Its function is as follows. RNA chaperone that binds small regulatory RNA (sRNAs) and mRNAs to facilitate mRNA translational regulation in response to envelope stress, environmental stress and changes in metabolite concentrations. Also binds with high specificity to tRNAs. The sequence is that of RNA-binding protein Hfq from Pseudomonas putida (strain GB-1).